Reading from the N-terminus, the 518-residue chain is U3 small nucleolar RNA-associated protein 15 homolog (518 aa).

The residue at position 2 (Ala2) is an N-acetylalanine. 7 WD repeats span residues 36–75 (KEFG…PIKT), 78–117 (RFKD…PLRQ), 120–159 (GHTK…EILT), 162–202 (EHSD…SVLS), 204–242 (EHGQ…QLLV), 246–285 (NHHK…VVHS), and 287–326 (DYAA…KKES). Lys249 is covalently cross-linked (Glycyl lysine isopeptide (Lys-Gly) (interchain with G-Cter in SUMO2)).

Part of the small subunit (SSU) processome, composed of more than 70 proteins and the RNA chaperone small nucleolar RNA (snoRNA) U3. May be a component of the proposed t-UTP subcomplex of the ribosomal small subunit (SSU) processome containing at least UTP4, WDR43, HEATR1, UTP15, WDR75. Interacts directly with UTP4 and WDR43.

It localises to the nucleus. It is found in the nucleolus. In terms of biological role, ribosome biogenesis factor. Involved in nucleolar processing of pre-18S ribosomal RNA. Required for optimal pre-ribosomal RNA transcription by RNA polymerase I. Part of the small subunit (SSU) processome, first precursor of the small eukaryotic ribosomal subunit. During the assembly of the SSU processome in the nucleolus, many ribosome biogenesis factors, an RNA chaperone and ribosomal proteins associate with the nascent pre-rRNA and work in concert to generate RNA folding, modifications, rearrangements and cleavage as well as targeted degradation of pre-ribosomal RNA by the RNA exosome. The chain is U3 small nucleolar RNA-associated protein 15 homolog from Homo sapiens (Human).